The sequence spans 213 residues: Probable nicotinate-nucleotide adenylyltransferase (213 aa).

Belongs to the NadD family.

The enzyme catalyses nicotinate beta-D-ribonucleotide + ATP + H(+) = deamido-NAD(+) + diphosphate. It functions in the pathway cofactor biosynthesis; NAD(+) biosynthesis; deamido-NAD(+) from nicotinate D-ribonucleotide: step 1/1. Its function is as follows. Catalyzes the reversible adenylation of nicotinate mononucleotide (NaMN) to nicotinic acid adenine dinucleotide (NaAD). The polypeptide is Probable nicotinate-nucleotide adenylyltransferase (Ruegeria pomeroyi (strain ATCC 700808 / DSM 15171 / DSS-3) (Silicibacter pomeroyi)).